Reading from the N-terminus, the 412-residue chain is Multifunctional CCA protein (412 aa).

The ATP site is built by G8 and R11. CTP is bound by residues G8 and R11. 2 residues coordinate Mg(2+): D21 and D23. The ATP site is built by R91, R137, and R140. CTP contacts are provided by R91, R137, and R140. Positions 228-329 (TGIHTLMTLS…VKLFDSIDAW (102 aa)) constitute an HD domain.

Belongs to the tRNA nucleotidyltransferase/poly(A) polymerase family. Bacterial CCA-adding enzyme type 1 subfamily. As to quaternary structure, monomer. Can also form homodimers and oligomers. Mg(2+) is required as a cofactor. It depends on Ni(2+) as a cofactor.

The catalysed reaction is a tRNA precursor + 2 CTP + ATP = a tRNA with a 3' CCA end + 3 diphosphate. It carries out the reaction a tRNA with a 3' CCA end + 2 CTP + ATP = a tRNA with a 3' CCACCA end + 3 diphosphate. Catalyzes the addition and repair of the essential 3'-terminal CCA sequence in tRNAs without using a nucleic acid template. Adds these three nucleotides in the order of C, C, and A to the tRNA nucleotide-73, using CTP and ATP as substrates and producing inorganic pyrophosphate. tRNA 3'-terminal CCA addition is required both for tRNA processing and repair. Also involved in tRNA surveillance by mediating tandem CCA addition to generate a CCACCA at the 3' terminus of unstable tRNAs. While stable tRNAs receive only 3'-terminal CCA, unstable tRNAs are marked with CCACCA and rapidly degraded. This chain is Multifunctional CCA protein, found in Escherichia coli O6:K15:H31 (strain 536 / UPEC).